Consider the following 128-residue polypeptide: Large ribosomal subunit protein mL51 (128 aa).

The N-terminal 31 residues, 1 to 31, are a transit peptide targeting the mitochondrion; sequence MAGSVPWAASRRLWGWVPSACRSFSLGVPRL.

Belongs to the mitochondrion-specific ribosomal protein mL51 family. In terms of assembly, component of the mitochondrial ribosome large subunit (39S) which comprises a 16S rRNA and about 50 distinct proteins. Interacts with OXA1L.

The protein resides in the mitochondrion. This chain is Large ribosomal subunit protein mL51 (Mrpl51), found in Mus musculus (Mouse).